The sequence spans 324 residues: NADH-ubiquinone oxidoreductase chain 1 (324 aa).

9 helical membrane-spanning segments follow: residues 9 to 29 (ILNPLAFIVPVLLAVAFLTLL), 43 to 63 (PNIVGPYGLLQPIADGVKLFI), 75 to 95 (ILFILTPMLALTLAMTLWAPL), 106 to 126 (LAILLFVALSSLAVYSILGSG), 146 to 166 (ISYEVSLGLILLSLIIFTGGF), 177 to 197 (SIWLIIPAWPLAAMWYISTLA), 228 to 250 (LFFLAEYANILFMNTLSASLFLG), 259 to 279 (ELTTMNLMTKAAVLSLVFLWV), and 299 to 319 (FLPLTLALVIWHLALPITFAG).

The protein belongs to the complex I subunit 1 family.

It is found in the mitochondrion inner membrane. The enzyme catalyses a ubiquinone + NADH + 5 H(+)(in) = a ubiquinol + NAD(+) + 4 H(+)(out). In terms of biological role, core subunit of the mitochondrial membrane respiratory chain NADH dehydrogenase (Complex I) that is believed to belong to the minimal assembly required for catalysis. Complex I functions in the transfer of electrons from NADH to the respiratory chain. The immediate electron acceptor for the enzyme is believed to be ubiquinone. This Tetraodon nigroviridis (Spotted green pufferfish) protein is NADH-ubiquinone oxidoreductase chain 1 (MT-ND1).